The following is a 289-amino-acid chain: Zinc finger matrin-type protein 3 (289 aa).

Residues 1–59 (MILLQHAGLPPPKRPSSSPPMSVAARSTGALQLPPQKPFGQEASLPLAGEEEPPKGGEQ) form a disordered region. Residues 9–18 (LPPPKRPSSS) show a composition bias toward pro residues. 2 consecutive Matrin-type zinc fingers follow at residues 70 to 100 (LYCK…KLRN) and 147 to 177 (DYCK…RLRL). Polar residues predominate over residues 180 to 191 (AQSNSFSDSSEV). The interval 180–200 (AQSNSFSDSSEVGQRRTRKEG) is disordered. The Matrin-type 3 zinc finger occupies 246 to 276 (FYCSMCNVGAGEEVEFRQHLESKQHKSKVSE).

Interacts with dsRNA.

The protein resides in the nucleus. Its subcellular location is the nucleolus. In terms of biological role, acts as a bona fide target gene of p53/TP53. May play a role in the TP53-dependent growth regulatory pathway. May contribute to TP53-mediated apoptosis by regulation of TP53 expression and translocation to the nucleus and nucleolus. The sequence is that of Zinc finger matrin-type protein 3 from Bos taurus (Bovine).